Reading from the N-terminus, the 1149-residue chain is Translocase of chloroplast 126, chloroplastic (1149 aa).

3 disordered regions span residues 1–206, 219–292, and 315–431; these read MDAL…GKEL, NMPN…RELT, and LELK…VNPS. Residues 131 to 142 are compositionally biased toward acidic residues; that stretch reads LYYDDYGDDGEV. A compositionally biased stretch (low complexity) spans 152-168; sequence TSSSSSSSSSECSSSAS. Composition is skewed to acidic residues over residues 271–280 and 335–357; these read YDQEGEDADS and GESDADADADADDEDVESGDEHE. A compositionally biased stretch (polar residues) spans 406 to 429; that stretch reads TAATDTQSSNAASSTQVAGTTDVN. Residues 514–743 form the AIG1-type G domain; sequence DFACTILVLG…KLQDTAAPGR (230 aa). The tract at residues 523 to 530 is G1; it reads GKTGVGKS. Residue 526-531 coordinates GTP; sequence GVGKSA. S530 is a Mg(2+) binding site. The interval 550-554 is G2; the sequence is STTNV. The interval 570–573 is G3; sequence DTPG. Residues 642 to 645 form a G4 region; sequence THAS. Residues H643 and 691–692 contribute to the GTP site; that span reads EN. A G5 region spans residues 691-693; that stretch reads ENH. Disordered regions lie at residues 769–800 and 833–869; these read KLPDEQLDESDESDDDEEDEEEGDEYDDLPPF and KQHREQLQRRKEMKKRATAMRKEGLSHPADEADDEAG. A compositionally biased stretch (acidic residues) spans 773–796; the sequence is EQLDESDESDDDEEDEEEGDEYDD. Composition is skewed to basic and acidic residues over residues 833–842 and 852–862; these read KQHREQLQRR and MRKEGLSHPAD. A helical membrane pass occupies residues 1123–1144; it reads MVLIGIVPILRSLINCRFGFGG.

This sequence belongs to the TRAFAC class TrmE-Era-EngA-EngB-Septin-like GTPase superfamily. AIG1/Toc34/Toc159-like paraseptin GTPase family. TOC159 subfamily. In terms of assembly, part of the TOC core complex. It depends on Mg(2+) as a cofactor.

The protein resides in the plastid. The protein localises to the chloroplast outer membrane. In terms of biological role, GTPase involved in protein precursor import into chloroplasts. Seems to recognize chloroplast-destined precursor proteins and regulate their presentation to the translocation channel through GTP hydrolysis. Probably specialized in the import of nuclear encoded non-photosynthetic preproteins from the cytoplasm to the chloroplast. This Physcomitrium patens (Spreading-leaved earth moss) protein is Translocase of chloroplast 126, chloroplastic.